Reading from the N-terminus, the 559-residue chain is MYYSSLAEAFERLERISSRKAKISLIAQFLRQCPEDVVDTVALFLANQVFPGWDPRDLGIGSKLMRKVIATATGSTDSEVTELFKRLGDLGLTAEELLKRRKTSTLLDSRPLMVGEVRETFEKIAEVEGEGAVKRKMRLMMGLLARAKPKEARYLVRQALSELRTGVRESTVEEAIAQAFGVSRKLVERAHMLSNDLGLVAKVAMTKGEEGLREIDLRPMRPIKPMLAQAARNVKEALAEVGGKGAVEIKLDGARVQVHSDGEEVRVYTRRIEDVTHALPDIVEAVKDCVDADEFILEGEAVAINPETGKPRPFQELLHRIKRKYDIEEVRKEIPVELHLFDCLYVDGESLVDTPFRERRRRLEEIVREREGEVMLVEQVITDDPKEAAEMFHRALEMGHEGVMVKDLDANYTPGVRGKKMLKVKPVLETLDCVVIGGIWGKGKRKGLIGSYLLAVWDENKENLLEVGKVGTGMDDETLERLTKMFEDLIVEESGREVRFKPEVVFEVEFEDIQKSPKYSSGFALRFPRLVRVRDDLGPEDADTIEKVRRIYEEVLQKH.

E248 is a binding site for ATP. Catalysis depends on K250, which acts as the N6-AMP-lysine intermediate. The ATP site is built by R255, R270, E300, F341, R417, and K423.

It belongs to the ATP-dependent DNA ligase family. The cofactor is Mg(2+).

It catalyses the reaction ATP + (deoxyribonucleotide)n-3'-hydroxyl + 5'-phospho-(deoxyribonucleotide)m = (deoxyribonucleotide)n+m + AMP + diphosphate.. Its function is as follows. DNA ligase that seals nicks in double-stranded DNA during DNA replication, DNA recombination and DNA repair. In Methanopyrus kandleri (strain AV19 / DSM 6324 / JCM 9639 / NBRC 100938), this protein is DNA ligase.